The following is a 265-amino-acid chain: Apolipoprotein A-I (265 aa).

The first 18 residues, Met-1–Ala-18, serve as a signal peptide directing secretion. Tandem repeats lie at residues Leu-67–Gly-88 and Pro-89–Asn-110. The 10 X approximate tandem repeats stretch occupies residues Leu-67–Ala-265. One copy of the 3; half-length repeat lies at Lys-111–Gln-121. 5 tandem repeats follow at residues Pro-122–Glu-143, Pro-144–Thr-165, Pro-166–Ala-187, Pro-188–Ser-209, and Ala-210–Lys-231. At Met-193 the chain carries Methionine sulfoxide. One copy of the 9; half-length repeat lies at Pro-232–Met-242. 2 positions are modified to methionine sulfoxide: Met-242 and Met-244. The stretch at Pro-243–Ala-265 is repeat 10.

Belongs to the apolipoprotein A1/A4/E family. As to quaternary structure, homodimer. Interacts with APOA1BP and CLU. Component of a sperm activating protein complex (SPAP), consisting of APOA1, an immunoglobulin heavy chain, an immunoglobulin light chain and albumin. Interacts with NDRG1. Interacts with SCGB3A2. Interacts with NAXE and YJEFN3. Post-translationally, glycosylated. Palmitoylated. In terms of processing, phosphorylation sites are present in the extracellular medium. Major protein of plasma HDL, also found in chylomicrons.

Its subcellular location is the secreted. Its function is as follows. Participates in the reverse transport of cholesterol from tissues to the liver for excretion by promoting cholesterol efflux from tissues and by acting as a cofactor for the lecithin cholesterol acyltransferase (LCAT). As part of the SPAP complex, activates spermatozoa motility. The chain is Apolipoprotein A-I (APOA1) from Tupaia belangeri (Common tree shrew).